A 653-amino-acid chain; its full sequence is Fructose-1,6-bisphosphatase class 3 (653 aa).

The protein belongs to the FBPase class 3 family. Requires Mn(2+) as cofactor.

It carries out the reaction beta-D-fructose 1,6-bisphosphate + H2O = beta-D-fructose 6-phosphate + phosphate. Its pathway is carbohydrate biosynthesis; gluconeogenesis. This Listeria monocytogenes serotype 4b (strain CLIP80459) protein is Fructose-1,6-bisphosphatase class 3.